Reading from the N-terminus, the 349-residue chain is Green-sensitive opsin-2 (349 aa).

At 1–36 (MNGTEGNNFYIPMSNRTGLVRSPYEYTQYYLADPWQ) the chain is on the extracellular side. N-linked (GlcNAc...) asparagine glycosylation is found at N2 and N15. The helical transmembrane segment at 37-61 (FKALAFYMFFLICFGLPINVLTLLV) threads the bilayer. At 62–73 (TAQHKKLRQPLN) the chain is on the cytoplasmic side. Residues 74 to 99 (YILVNLAFAGTIMAFFGFTVTFYCSI) traverse the membrane as a helical segment. The Extracellular segment spans residues 100 to 113 (NGYMALGPTGCAIE). A disulfide bridge links C110 with C187. Residues 114–133 (GFFATLGGQVALWSLVVLAI) form a helical membrane-spanning segment. Residues 134–152 (ERYIVVCKPMGSFKFSSNH) are Cytoplasmic-facing. A helical membrane pass occupies residues 153-176 (AMAGIAFTWVMASSCAVPPLFGWS). The Extracellular portion of the chain corresponds to 177–202 (RYIPEGMQTSCGPDYYTLNPEFNNES). N200 is a glycosylation site (N-linked (GlcNAc...) asparagine). A helical membrane pass occupies residues 203-230 (YVLYMFSCHFCVPVTTIFFTYGSLVCTV). At 231–252 (KAAAAQQQESESTQKAEREVTR) the chain is on the cytoplasmic side. The chain crosses the membrane as a helical span at residues 253-276 (MVILMVLGFLVAWVPYASFAAWIF). Over 277-284 (FNRGAAFS) the chain is Extracellular. The chain crosses the membrane as a helical span at residues 285-309 (AQAMAIPAFFSKASALFNPIIYVLL). K296 carries the N6-(retinylidene)lysine modification. Residues 310 to 349 (NKQFRSCMLNTLFCGKSPLGDDESSSVSTSKTEVSSVSPA) are Cytoplasmic-facing. Residues 328–349 (LGDDESSSVSTSKTEVSSVSPA) are disordered. Low complexity predominate over residues 334-349 (SSVSTSKTEVSSVSPA).

Belongs to the G-protein coupled receptor 1 family. Opsin subfamily. Phosphorylated on some or all of the serine and threonine residues present in the C-terminal region.

Its subcellular location is the membrane. Visual pigments are the light-absorbing molecules that mediate vision. They consist of an apoprotein, opsin, covalently linked to cis-retinal. In Danio rerio (Zebrafish), this protein is Green-sensitive opsin-2 (opn1mw2).